Reading from the N-terminus, the 236-residue chain is MNTTPDMPTPRALRELTPLEARILGVLVEKQHTVPDTYPLSLNALTAGCNQKTARSPVMNVSEDEVTTALDSLKHLSLVMEGSSSRVPRFEHNMNRVLGIPSQAIALLTILLLRGPQTAAELRLNSARLHGFADISSVEAFLDELAARAQPLVIRLPRAPGARENRWMHLMCGEVNVADFAGPDTGGGTDSVPPSEFEALKAEQKRLADEVARLNALVQRMATELGIDVDAPGDVS.

Belongs to the UPF0502 family.

This chain is UPF0502 protein BamMC406_5439, found in Burkholderia ambifaria (strain MC40-6).